The following is a 443-amino-acid chain: Thymidine phosphorylase (443 aa).

It belongs to the thymidine/pyrimidine-nucleoside phosphorylase family. Homodimer.

It catalyses the reaction thymidine + phosphate = 2-deoxy-alpha-D-ribose 1-phosphate + thymine. The protein operates within pyrimidine metabolism; dTMP biosynthesis via salvage pathway; dTMP from thymine: step 1/2. In terms of biological role, the enzymes which catalyze the reversible phosphorolysis of pyrimidine nucleosides are involved in the degradation of these compounds and in their utilization as carbon and energy sources, or in the rescue of pyrimidine bases for nucleotide synthesis. This Shewanella loihica (strain ATCC BAA-1088 / PV-4) protein is Thymidine phosphorylase.